The sequence spans 358 residues: NADH-quinone oxidoreductase subunit H (358 aa).

Transmembrane regions (helical) follow at residues 20-40 (ITVG…IPLI), 95-115 (ALFY…WAVI), 128-148 (IGLL…IIAG), 168-188 (ISYE…SGSM), 206-226 (VFSW…ISAV), 253-273 (GFAF…IAAL), 295-315 (TPSA…YLWI), and 334-354 (VLIP…ISPL).

The protein belongs to the complex I subunit 1 family. As to quaternary structure, NDH-1 is composed of 14 different subunits. Subunits NuoA, H, J, K, L, M, N constitute the membrane sector of the complex.

It is found in the cell inner membrane. It catalyses the reaction a quinone + NADH + 5 H(+)(in) = a quinol + NAD(+) + 4 H(+)(out). Functionally, NDH-1 shuttles electrons from NADH, via FMN and iron-sulfur (Fe-S) centers, to quinones in the respiratory chain. The immediate electron acceptor for the enzyme in this species is believed to be ubiquinone. Couples the redox reaction to proton translocation (for every two electrons transferred, four hydrogen ions are translocated across the cytoplasmic membrane), and thus conserves the redox energy in a proton gradient. This subunit may bind ubiquinone. This chain is NADH-quinone oxidoreductase subunit H, found in Neisseria gonorrhoeae (strain ATCC 700825 / FA 1090).